Here is a 507-residue protein sequence, read N- to C-terminus: ATP synthase subunit beta (507 aa).

A disordered region spans residues 1-22 (MSGLASKAKSRVKSSKGKNSTN). 183-190 (GGAGVGKT) contributes to the ATP binding site.

Belongs to the ATPase alpha/beta chains family. F-type ATPases have 2 components, CF(1) - the catalytic core - and CF(0) - the membrane proton channel. CF(1) has five subunits: alpha(3), beta(3), gamma(1), delta(1), epsilon(1). CF(0) has three main subunits: a(1), b(2) and c(9-12). The alpha and beta chains form an alternating ring which encloses part of the gamma chain. CF(1) is attached to CF(0) by a central stalk formed by the gamma and epsilon chains, while a peripheral stalk is formed by the delta and b chains.

Its subcellular location is the cell inner membrane. It catalyses the reaction ATP + H2O + 4 H(+)(in) = ADP + phosphate + 5 H(+)(out). Functionally, produces ATP from ADP in the presence of a proton gradient across the membrane. The catalytic sites are hosted primarily by the beta subunits. The sequence is that of ATP synthase subunit beta from Ehrlichia chaffeensis (strain ATCC CRL-10679 / Arkansas).